The following is an 85-amino-acid chain: MGNLISTSCFNSKEKFRSQISDYSTWYPQPGQHISIRTFRELNPAPTSSPTSTRTETQLNGGNSRSTVEVLEEVNRQLTTHMPRR.

Gly2 is lipidated: N-myristoyl glycine; by host. Residues 42–65 (LNPAPTSSPTSTRTETQLNGGNSR) form a disordered region. Low complexity predominate over residues 44 to 57 (PAPTSSPTSTRTET).

It belongs to the geminiviridae protein AC4/C4 family. As to quaternary structure, interacts with Arabidopsis thaliana RCH2, ASK7/ASK-eta and ASK6/ASK-zeta. Post-translationally, phosphorylated by Arabidopsis thaliana ASK7/ASK-eta mainly on threonine and serine residues. In terms of tissue distribution, expressed in vascular tissues, and especially in phloem cells.

It localises to the host cell membrane. Its function is as follows. Major determinant of pathogenesis that affects the hyperplastic response of the host to viral infection. Mediates the induction of cell division in permissive cells, mainly in phloem. May act as a suppressor of RNA-mediated gene silencing, also known as post-transcriptional gene silencing (PTGS), a mechanism of plant viral defense that limits the accumulation of viral RNAs. This chain is Protein C4, found in Beet curly top virus (strain California/Logan) (BCTV).